Consider the following 317-residue polypeptide: DNA-directed RNA polymerase subunit alpha 2 (317 aa).

The tract at residues 1-227 (MALENLLHPT…NQLRNIVDIE (227 aa)) is alpha N-terminal domain (alpha-NTD). An alpha C-terminal domain (alpha-CTD) region spans residues 241–317 (INPILLKHVE…TLIENWPQDL (77 aa)).

This sequence belongs to the RNA polymerase alpha chain family. Homodimer. The RNAP catalytic core consists of 2 alpha, 1 beta, 1 beta' and 1 omega subunit. When a sigma factor is associated with the core the holoenzyme is formed, which can initiate transcription.

It catalyses the reaction RNA(n) + a ribonucleoside 5'-triphosphate = RNA(n+1) + diphosphate. DNA-dependent RNA polymerase catalyzes the transcription of DNA into RNA using the four ribonucleoside triphosphates as substrates. This is DNA-directed RNA polymerase subunit alpha 2 from Francisella tularensis subsp. holarctica (strain LVS).